A 24-amino-acid chain; its full sequence is KASSSAPKGWTHHGSRFTFHRGSM.

Residues 1 to 24 are disordered; sequence KASSSAPKGWTHHGSRFTFHRGSM. Over residues 10–24 the composition is skewed to basic residues; the sequence is WTHHGSRFTFHRGSM. One can recognise a C-type lectin domain in the interval 13–24; that stretch reads HGSRFTFHRGSM.

Expressed by the venom gland.

The protein localises to the secreted. Its function is as follows. Able to depolarize frog skeletal muscle fibers, but has no effects on squid giant axons. Tetrodotoxin is able to partially antagonize the depolarization. Induces myonecrosis. The sequence is that of Myotoxin TmC4-47.2 from Thalassophryne maculosa (Cano toadfish).